The chain runs to 346 residues: E3 ubiquitin-protein ligase ARK2C (346 aa).

Disordered stretches follow at residues 23–76 (PFQR…QHSG) and 267–288 (PHKY…GEES). The interval 266–268 (FPH) is ubiquitin binding. A compositionally biased stretch (basic and acidic residues) spans 275-284 (PQDGKGKKDE). Zn(2+) is bound by residues Cys294 and Cys297. Residues 294–335 (CTICLSMLEDGEDVRRLPCMHLFHQLCVDQWLAMSKKCPICR) form an RING-type; atypical zinc finger. A ubiquitin binding region spans residues 309-313 (RLPCM). Residues His317 and Cys320 each contribute to the Zn(2+) site.

The protein belongs to the Arkadia family. Monomer; binding to the ubiquitin-conjugating enzyme E2 does not trigger homodimerization.

It is found in the nucleus. The enzyme catalyses S-ubiquitinyl-[E2 ubiquitin-conjugating enzyme]-L-cysteine + [acceptor protein]-L-lysine = [E2 ubiquitin-conjugating enzyme]-L-cysteine + N(6)-ubiquitinyl-[acceptor protein]-L-lysine.. With respect to regulation, binds free ubiquitin non-covalently via its RING-type zinc finger. Ubiquitin-binding leads to enhance the E3 ubiquitin-protein ligase activity by stabilizing the ubiquitin-conjugating enzyme E2 (donor ubiquitin) in the 'closed' conformation and activating ubiquitin transfer. In terms of biological role, E3 ubiquitin-protein ligase that acts as a regulator of motor axon elongation. Required for efficient motor axon extension in the dorsal forelimb by enhancing the transcriptional responses of the SMAD1/SMAD5/SMAD8 effectors, which are activated downstream of BMP. Acts by mediating ubiquitination and degradation of SMAD inhibitors such as SMAD6, SMAD7, SKI and SNON isoform of SKIL. This Homo sapiens (Human) protein is E3 ubiquitin-protein ligase ARK2C.